A 386-amino-acid chain; its full sequence is Succinyl-diaminopimelate desuccinylase (386 aa).

Position 77 (histidine 77) interacts with Zn(2+). The active site involves aspartate 79. Aspartate 110 serves as a coordination point for Zn(2+). Glutamate 144 (proton acceptor) is an active-site residue. 3 residues coordinate Zn(2+): glutamate 145, glutamate 173, and histidine 359.

It belongs to the peptidase M20A family. DapE subfamily. Homodimer. It depends on Zn(2+) as a cofactor. Co(2+) serves as cofactor.

The catalysed reaction is N-succinyl-(2S,6S)-2,6-diaminopimelate + H2O = (2S,6S)-2,6-diaminopimelate + succinate. It participates in amino-acid biosynthesis; L-lysine biosynthesis via DAP pathway; LL-2,6-diaminopimelate from (S)-tetrahydrodipicolinate (succinylase route): step 3/3. Catalyzes the hydrolysis of N-succinyl-L,L-diaminopimelic acid (SDAP), forming succinate and LL-2,6-diaminopimelate (DAP), an intermediate involved in the bacterial biosynthesis of lysine and meso-diaminopimelic acid, an essential component of bacterial cell walls. This chain is Succinyl-diaminopimelate desuccinylase, found in Methylibium petroleiphilum (strain ATCC BAA-1232 / LMG 22953 / PM1).